The following is a 95-amino-acid chain: Large ribosomal subunit protein bL27 (95 aa).

Residues 1 to 10 (MLLTMNLQLF) constitute a propeptide that is removed on maturation. The interval 12–38 (HKKGGGSTSNGRDSESKRLGAKSADGQ) is disordered.

Belongs to the bacterial ribosomal protein bL27 family. Post-translationally, the N-terminus is cleaved by ribosomal processing cysteine protease Prp.

The polypeptide is Large ribosomal subunit protein bL27 (Enterococcus faecalis (strain ATCC 700802 / V583)).